A 417-amino-acid polypeptide reads, in one-letter code: MSALMKTDPEIAEAIRLETRRQAGKLELIASENFVSEAVLEAQGCIMTNKYAEGYPGKRYYGGCEYVDIAENLAIERCKALFGADYVNVQPHSGTQANMAVYFSALSVGDTILGMNLAHGGHLSHGSPANFSGKFYNVVPYGVDRETETIDYNQVEDLALQHKPRMIVVGASAYPRTIDFEKFRAIADKVGALVMADIAHIAGLVATGLHPSPVPVCEYVTSTTHKTLRGPRGGLVMCQASYQKTLSSRVFPGVQGGPLMHIIAAKAVAFKEALTDEFKDYQSQIVKNAQALAKELIGRGYRLVSGGTDNHLLLMDLTDKGLTGKEAQESLDSAGITVNKNGIPFDTRGPMVTSGIRIGTPALTSRGMKEEEMRTIARLIAEVLEHRDNEKHLMAVKEEVGRLCQNFPLYAERIASA.

Residues Leu117 and 121–123 each bind (6S)-5,6,7,8-tetrahydrofolate; that span reads GHL. Position 226 is an N6-(pyridoxal phosphate)lysine (Lys226).

It belongs to the SHMT family. Homodimer. It depends on pyridoxal 5'-phosphate as a cofactor.

The protein localises to the cytoplasm. It carries out the reaction (6R)-5,10-methylene-5,6,7,8-tetrahydrofolate + glycine + H2O = (6S)-5,6,7,8-tetrahydrofolate + L-serine. Its pathway is one-carbon metabolism; tetrahydrofolate interconversion. It participates in amino-acid biosynthesis; glycine biosynthesis; glycine from L-serine: step 1/1. Catalyzes the reversible interconversion of serine and glycine with tetrahydrofolate (THF) serving as the one-carbon carrier. This reaction serves as the major source of one-carbon groups required for the biosynthesis of purines, thymidylate, methionine, and other important biomolecules. Also exhibits THF-independent aldolase activity toward beta-hydroxyamino acids, producing glycine and aldehydes, via a retro-aldol mechanism. This is Serine hydroxymethyltransferase from Syntrophus aciditrophicus (strain SB).